The primary structure comprises 677 residues: Methionine--tRNA ligase (677 aa).

A 'HIGH' region motif is present at residues 15–25 (PYANGSIHLGH). Zn(2+) contacts are provided by cysteine 146, cysteine 149, cysteine 159, and cysteine 162. Residues 333-337 (KMSKS) carry the 'KMSKS' region motif. Lysine 336 is a binding site for ATP. Residues 576–677 (DFAKIDLRVA…EGAKPGMRVK (102 aa)) form the tRNA-binding domain.

Belongs to the class-I aminoacyl-tRNA synthetase family. MetG type 1 subfamily. In terms of assembly, homodimer. The cofactor is Zn(2+).

The protein localises to the cytoplasm. The enzyme catalyses tRNA(Met) + L-methionine + ATP = L-methionyl-tRNA(Met) + AMP + diphosphate. Functionally, is required not only for elongation of protein synthesis but also for the initiation of all mRNA translation through initiator tRNA(fMet) aminoacylation. The chain is Methionine--tRNA ligase from Aeromonas hydrophila subsp. hydrophila (strain ATCC 7966 / DSM 30187 / BCRC 13018 / CCUG 14551 / JCM 1027 / KCTC 2358 / NCIMB 9240 / NCTC 8049).